A 325-amino-acid chain; its full sequence is Holliday junction branch migration complex subunit RuvB (325 aa).

A large ATPase domain (RuvB-L) region spans residues 1 to 180 (MKNQLLDAKV…FGIHLKLNFY (180 aa)). Residues Leu-19, Arg-20, Gly-61, Lys-64, Thr-65, Ser-66, 127–129 (EDF), Arg-170, Tyr-180, and Arg-217 contribute to the ATP site. A Mg(2+)-binding site is contributed by Thr-65. The small ATPAse domain (RuvB-S) stretch occupies residues 181 to 251 (SCEELTQIVE…ITDYALNQLG (71 aa)). The interval 254–325 (KLGLDSSDHK…ITANALKHLH (72 aa)) is head domain (RuvB-H). DNA contacts are provided by Arg-290, Arg-309, and Arg-314.

Belongs to the RuvB family. Homohexamer. Forms an RuvA(8)-RuvB(12)-Holliday junction (HJ) complex. HJ DNA is sandwiched between 2 RuvA tetramers; dsDNA enters through RuvA and exits via RuvB. An RuvB hexamer assembles on each DNA strand where it exits the tetramer. Each RuvB hexamer is contacted by two RuvA subunits (via domain III) on 2 adjacent RuvB subunits; this complex drives branch migration. In the full resolvosome a probable DNA-RuvA(4)-RuvB(12)-RuvC(2) complex forms which resolves the HJ.

It localises to the cytoplasm. It carries out the reaction ATP + H2O = ADP + phosphate + H(+). The RuvA-RuvB-RuvC complex processes Holliday junction (HJ) DNA during genetic recombination and DNA repair, while the RuvA-RuvB complex plays an important role in the rescue of blocked DNA replication forks via replication fork reversal (RFR). RuvA specifically binds to HJ cruciform DNA, conferring on it an open structure. The RuvB hexamer acts as an ATP-dependent pump, pulling dsDNA into and through the RuvAB complex. RuvB forms 2 homohexamers on either side of HJ DNA bound by 1 or 2 RuvA tetramers; 4 subunits per hexamer contact DNA at a time. Coordinated motions by a converter formed by DNA-disengaged RuvB subunits stimulates ATP hydrolysis and nucleotide exchange. Immobilization of the converter enables RuvB to convert the ATP-contained energy into a lever motion, pulling 2 nucleotides of DNA out of the RuvA tetramer per ATP hydrolyzed, thus driving DNA branch migration. The RuvB motors rotate together with the DNA substrate, which together with the progressing nucleotide cycle form the mechanistic basis for DNA recombination by continuous HJ branch migration. Branch migration allows RuvC to scan DNA until it finds its consensus sequence, where it cleaves and resolves cruciform DNA. The protein is Holliday junction branch migration complex subunit RuvB of Orientia tsutsugamushi (strain Boryong) (Rickettsia tsutsugamushi).